We begin with the raw amino-acid sequence, 1018 residues long: Contactin-1 (1018 aa).

The signal sequence occupies residues 1-20 (MKMWLLFSLLVIISFKTCLS). Ig-like C2-type domains are found at residues 41–131 (PIFE…ATLS), 137–223 (PFPP…KSVF), 241–326 (PADI…ARIY), 331–407 (PEWV…AELK), 413–500 (PTFE…GTLV), and 504–601 (PTRI…LVVR). 2 disulfide bridges follow: cysteine 65–cysteine 114 and cysteine 158–cysteine 211. N-linked (GlcNAc...) asparagine glycans are attached at residues asparagine 208 and asparagine 258. Cysteine 263 and cysteine 310 form a disulfide bridge. Residue asparagine 338 is glycosylated (N-linked (GlcNAc...) asparagine). 2 disulfide bridges follow: cysteine 352-cysteine 391 and cysteine 436-cysteine 484. N-linked (GlcNAc...) asparagine glycosylation is found at asparagine 457, asparagine 473, asparagine 494, and asparagine 521. The cysteines at positions 526 and 583 are disulfide-linked. Residue asparagine 591 is glycosylated (N-linked (GlcNAc...) asparagine). Fibronectin type-III domains are found at residues 606–704 (PPGG…TDGA), 709–806 (APSD…SAQD), 811–906 (APTA…APPS), and 907–1000 (QPPR…ILSP). 2 disordered regions span residues 698 to 718 (KIKT…GGGG) and 891 to 910 (PPSD…QPPR). A lipid anchor (GPI-anchor amidated serine) is attached at serine 999. Residues 1000 to 1018 (PCLLGFLLPALGILVYLEF) constitute a propeptide, removed in mature form.

This sequence belongs to the immunoglobulin superfamily. Contactin family. As to quaternary structure, monomer. Interacts with CNTNAP1 in cis form. Binds to the carbonic-anhydrase like domain of PTPRZ1. Interacts with NOTCH1 and TNR. Detected in a complex with NRCAM and PTPRB. Interacts with TASOR.

Its subcellular location is the cell membrane. In terms of biological role, contactins mediate cell surface interactions during nervous system development. Involved in the formation of paranodal axo-glial junctions in myelinated peripheral nerves and in the signaling between axons and myelinating glial cells via its association with CNTNAP1. Participates in oligodendrocytes generation by acting as a ligand of NOTCH1. Its association with NOTCH1 promotes NOTCH1 activation through the released notch intracellular domain (NICD) and subsequent translocation to the nucleus. Interaction with TNR induces a repulsion of neurons and an inhibition of neurite outgrowth. The chain is Contactin-1 (CNTN1) from Bos taurus (Bovine).